The sequence spans 363 residues: Ribosomal RNA large subunit methyltransferase M (363 aa).

S-adenosyl-L-methionine contacts are provided by residues Ser194, 227-230, Asp246, Asp266, and Asp284; that span reads CPGG. Lys313 (proton acceptor) is an active-site residue.

Belongs to the class I-like SAM-binding methyltransferase superfamily. RNA methyltransferase RlmE family. RlmM subfamily. In terms of assembly, monomer.

Its subcellular location is the cytoplasm. It carries out the reaction cytidine(2498) in 23S rRNA + S-adenosyl-L-methionine = 2'-O-methylcytidine(2498) in 23S rRNA + S-adenosyl-L-homocysteine + H(+). In terms of biological role, catalyzes the 2'-O-methylation at nucleotide C2498 in 23S rRNA. This chain is Ribosomal RNA large subunit methyltransferase M, found in Haemophilus influenzae (strain 86-028NP).